A 300-amino-acid chain; its full sequence is Acetylglutamate kinase (300 aa).

Residues glycine 73–glycine 74, arginine 95, and asparagine 197 contribute to the substrate site.

It belongs to the acetylglutamate kinase family. ArgB subfamily.

The protein localises to the cytoplasm. The catalysed reaction is N-acetyl-L-glutamate + ATP = N-acetyl-L-glutamyl 5-phosphate + ADP. Its pathway is amino-acid biosynthesis; L-arginine biosynthesis; N(2)-acetyl-L-ornithine from L-glutamate: step 2/4. Functionally, catalyzes the ATP-dependent phosphorylation of N-acetyl-L-glutamate. This Polynucleobacter asymbioticus (strain DSM 18221 / CIP 109841 / QLW-P1DMWA-1) (Polynucleobacter necessarius subsp. asymbioticus) protein is Acetylglutamate kinase.